The following is a 573-amino-acid chain: MAQEEVQKSADVAAAPVVKEKPITDKEVTIPTPVAEKEEVAAPVSDEKAVPEKEVTPEKEAPAAEAEKSVSVKEEETVVVAEKVVVLTAEEVQKKALEEFKELVREALNKREFTAPVTPVKEEKTEEKKTEEETKEEEKTEEKKEETTTEVKVEEEKPAVPAAEEEKSSEAAPVETKSEEKPEEKAEVTTEKASSAEEDGTKTVEAIEESIVSVSPPESAVAPVVVETVAVAEAEPVEPEEVSIWGVPLLQDERSDVILTKFLRARDFKVKEALTMLKNTVQWRKENKIDELVESGEEVSEFEKMVFAHGVDKEGHVVIYSSYGEFQNKELFSDKEKLNKFLSWRIQLQEKCVRAIDFSNPEAKSSFVFVSDFRNAPGLGKRALWQFIRRAVKQFEDNYPEFAAKELFINVPWWYIPYYKTFGSIITSPRTRSKMVLAGPSKSADTIFKYIAPEQVPVKYGGLSKDTPLTEETITEAIVKPAANYTIELPASEACTLSWELRVLGADVSYGAQFEPTTEGSYAVIVSKTRKIGSTDEPVITDSFKVGEPGKIVITIDNQTSKKKKVLYRFKTQ.

Disordered stretches follow at residues 1-74 and 111-202; these read MAQE…SVKE and REFT…DGTK. At A2 the chain carries N-acetylalanine. Basic and acidic residues predominate over residues 18–28; that stretch reads VKEKPITDKEV. T29 bears the Phosphothreonine mark. Over residues 35 to 74 the composition is skewed to basic and acidic residues; that stretch reads AEKEEVAAPVSDEKAVPEKEVTPEKEAPAAEAEKSVSVKE. Positions 89 to 157 form a coiled coil; it reads AEEVQKKALE…TTEVKVEEEK (69 aa). A Phosphothreonine modification is found at T118. Basic and acidic residues-rich tracts occupy residues 120–169 and 176–190; these read VKEE…EKSS and TKSE…EVTT. At S195 the chain carries Phosphoserine. K285 is covalently cross-linked (Glycyl lysine isopeptide (Lys-Gly) (interchain with G-Cter in ubiquitin)). The CRAL-TRIO domain maps to 295–468; sequence SGEEVSEFEK…KYGGLSKDTP (174 aa). One can recognise a GOLD domain in the interval 471–572; that stretch reads EETITEAIVK…KKKVLYRFKT (102 aa).

The protein belongs to the patellin family. Interacts with the deubiquitinating enzyme AMSH3. In terms of tissue distribution, expressed ubiquitously with higher levels in expanding roots and leaves (at protein level).

Its subcellular location is the membrane. It is found in the cytoplasm. Carrier protein that may be involved in membrane-trafficking events associated with cell plate formation during cytokinesis. Binds to some hydrophobic molecules and promotes their transfer between the different cellular sites. Binds to phosphoinositides with a preference for PtdIns(5)P, PtdIns(4,5)P2 and PtdIns(3)P. In Arabidopsis thaliana (Mouse-ear cress), this protein is Patellin-1 (PATL1).